Consider the following 94-residue polypeptide: Large ribosomal subunit protein uL23 (94 aa).

The protein belongs to the universal ribosomal protein uL23 family. Part of the 50S ribosomal subunit. Contacts protein L29, and trigger factor when it is bound to the ribosome.

Its function is as follows. One of the early assembly proteins it binds 23S rRNA. One of the proteins that surrounds the polypeptide exit tunnel on the outside of the ribosome. Forms the main docking site for trigger factor binding to the ribosome. This is Large ribosomal subunit protein uL23 from Trichlorobacter lovleyi (strain ATCC BAA-1151 / DSM 17278 / SZ) (Geobacter lovleyi).